Here is a 428-residue protein sequence, read N- to C-terminus: Diaminopimelate decarboxylase (428 aa).

K64 is subject to N6-(pyridoxal phosphate)lysine. Residues G239 and 281–284 (EPGR) each bind pyridoxal 5'-phosphate. Substrate-binding residues include R284, R319, and Y323. The active-site Proton donor is the C350. Substrate is bound by residues E351 and Y379. Pyridoxal 5'-phosphate is bound at residue Y379.

Belongs to the Orn/Lys/Arg decarboxylase class-II family. LysA subfamily. Homodimer. Requires pyridoxal 5'-phosphate as cofactor.

It catalyses the reaction meso-2,6-diaminopimelate + H(+) = L-lysine + CO2. Its pathway is amino-acid biosynthesis; L-lysine biosynthesis via DAP pathway; L-lysine from DL-2,6-diaminopimelate: step 1/1. Functionally, specifically catalyzes the decarboxylation of meso-diaminopimelate (meso-DAP) to L-lysine. The protein is Diaminopimelate decarboxylase of Methanothermobacter thermautotrophicus (strain ATCC 29096 / DSM 1053 / JCM 10044 / NBRC 100330 / Delta H) (Methanobacterium thermoautotrophicum).